A 177-amino-acid chain; its full sequence is Large ribosomal subunit protein uL6 (177 aa).

This sequence belongs to the universal ribosomal protein uL6 family. In terms of assembly, part of the 50S ribosomal subunit.

This protein binds to the 23S rRNA, and is important in its secondary structure. It is located near the subunit interface in the base of the L7/L12 stalk, and near the tRNA binding site of the peptidyltransferase center. This chain is Large ribosomal subunit protein uL6, found in Bradyrhizobium diazoefficiens (strain JCM 10833 / BCRC 13528 / IAM 13628 / NBRC 14792 / USDA 110).